The primary structure comprises 130 residues: Methylglyoxal synthase (130 aa).

One can recognise an MGS-like domain in the interval 1–130 (MSKPRIALIA…DLARNMQDVC (130 aa)). Substrate contacts are provided by residues His11, Lys15, 37 to 40 (TGTT), and 57 to 58 (SG). Catalysis depends on Asp63, which acts as the Proton donor/acceptor. His90 contacts substrate.

It belongs to the methylglyoxal synthase family.

It carries out the reaction dihydroxyacetone phosphate = methylglyoxal + phosphate. In terms of biological role, catalyzes the formation of methylglyoxal from dihydroxyacetone phosphate. In Burkholderia cenocepacia (strain HI2424), this protein is Methylglyoxal synthase.